The primary structure comprises 140 residues: Lymphocyte antigen 6H (140 aa).

A signal peptide spans 1–25 (MLPAAMKGLGLALLAVLLCSAPAHG). The UPAR/Ly6 domain occupies 26 to 91 (LWCQDCTLTT…RHFFSDYLMG (66 aa)). 4 disulfides stabilise this stretch: cysteine 28/cysteine 52, cysteine 31/cysteine 40, cysteine 45/cysteine 73, and cysteine 77/cysteine 104. Asparagine 36 carries an N-linked (GlcNAc...) asparagine glycan. Glycine 115 carries GPI-anchor amidated glycine lipidation. A propeptide spans 116-140 (AGHSPWALAGGLLLSLGPALLWAGP) (removed in mature form).

As to quaternary structure, interacts with CHRNA4 and CHRNA7.

It localises to the cell membrane. Its function is as follows. Believed to act as a modulator of nicotinic acetylcholine receptors (nAChRs) activity. In vitro inhibits alpha-3:beta-4-containing nAChRs maximum response. May play a role in the intracellular trafficking of alpha-7-containing nAChRs and may inhibit their expression at the cell surface. Seems to inhibit alpha-7/CHRNA7 signaling in hippocampal neurons. The sequence is that of Lymphocyte antigen 6H (LY6H) from Macaca fascicularis (Crab-eating macaque).